Here is a 457-residue protein sequence, read N- to C-terminus: Transcription factor CP2-like protein 1 (457 aa).

Residues M1 to C52 form a mediate transcriptional repression region. Positions R43 to N280 constitute a Grh/CP2 DB domain. Disordered stretches follow at residues K219–Y245 and P271–G301. Over residues K221 to Y245 the composition is skewed to basic and acidic residues. An SAM2-like domain region spans residues P261 to R365. Residues P271–S281 show a composition bias toward polar residues.

It belongs to the grh/CP2 family. CP2 subfamily. As to quaternary structure, forms homohexamers via its SAM-like domain. Interacts with MTA1; which is indispensable for TFCP2L1-mediated self-renewal-promoting effect and endoderm-inhibiting action.

Its subcellular location is the nucleus. Functionally, transcription factor that facilitates establishment and maintenance of pluripotency in embryonic stem cells (ESCs). With KLF2, acts as the major effector of self-renewal that mediates induction of pluripotency downstream of LIF/STAT3 and Wnt/beta-catenin signaling. Required for normal duct development in the salivary gland and kidney. Coordinates the development of the kidney collecting ducts intercalated (IC) and principal (PC) cells, which regulate acid-base and salt-water homeostasis, respectively. Regulates the expression of IC genes including subunits B1 and D2 of the V-ATPase complex, OXGR1, CA12, SLC4A1, AQP6 and IC-specific transcription factor FOXI1. Also regulates the expression of JAG1 and subsequent notch signaling in the collecting duct. JAG1 initiates notch signaling in PCs but inhibits notch signaling in ICs. Acts as a transcriptional suppressor that may suppress UBP1-mediated transcriptional activation. Modulates the placental expression of CYP11A1. This is Transcription factor CP2-like protein 1 (TFCP2L1) from Pongo abelii (Sumatran orangutan).